Consider the following 504-residue polypeptide: GTPase Der (504 aa).

The 165-residue stretch at 4–168 (PVVALVGRPN…QVLAPFAEKM (165 aa)) folds into the EngA-type G 1 domain. Residues 10–17 (GRPNVGKS), 57–61 (DTGGI), and 120–123 (NKTD) each bind GTP. Positions 168 to 179 (MENADENDRTSE) are enriched in basic and acidic residues. The segment at 168-191 (MENADENDRTSEEEQDEWEQEFDF) is disordered. Positions 180–191 (EEQDEWEQEFDF) are enriched in acidic residues. Residues 216–389 (IKIAIVGRPN…SIKEAYACAT (174 aa)) enclose the EngA-type G 2 domain. GTP is bound by residues 222–229 (GRPNVGKS), 269–273 (DTAGV), and 334–337 (NKWD). Positions 390–474 (QKMTTSLLTR…PIRLLFQEGS (85 aa)) constitute a KH-like domain.

This sequence belongs to the TRAFAC class TrmE-Era-EngA-EngB-Septin-like GTPase superfamily. EngA (Der) GTPase family. Associates with the 50S ribosomal subunit.

Functionally, GTPase that plays an essential role in the late steps of ribosome biogenesis. In Haemophilus influenzae (strain ATCC 51907 / DSM 11121 / KW20 / Rd), this protein is GTPase Der.